Reading from the N-terminus, the 305-residue chain is D-alanine--D-alanine ligase (305 aa).

One can recognise an ATP-grasp domain in the interval 107 to 299 (KVIFASAGLK…FGELVLRILQ (193 aa)). Residue 134–185 (PLPVVVKPSREGSSVGVGIVRDPSRMQAALDEAFRYDSEILIEGFIDGREVQ) participates in ATP binding. The Mg(2+) site is built by D253, E266, and N268.

It belongs to the D-alanine--D-alanine ligase family. It depends on Mg(2+) as a cofactor. The cofactor is Mn(2+).

The protein resides in the cytoplasm. The enzyme catalyses 2 D-alanine + ATP = D-alanyl-D-alanine + ADP + phosphate + H(+). The protein operates within cell wall biogenesis; peptidoglycan biosynthesis. Functionally, cell wall formation. This chain is D-alanine--D-alanine ligase, found in Citrifermentans bemidjiense (strain ATCC BAA-1014 / DSM 16622 / JCM 12645 / Bem) (Geobacter bemidjiensis).